The primary structure comprises 226 residues: ATP synthase F(0) complex subunit a (226 aa).

Transmembrane regions (helical) follow at residues 12–32, 68–88, 97–117, 138–158, 182–202, and 203–223; these read PTVL…LLIP, WSLM…LGLL, QLSM…AMGL, IPML…ALAV, LAIN…LTIL, and ETAI…LYLH.

The protein belongs to the ATPase A chain family. Component of the ATP synthase complex composed at least of ATP5F1A/subunit alpha, ATP5F1B/subunit beta, ATP5MC1/subunit c (homooctomer), MT-ATP6/subunit a, MT-ATP8/subunit 8, ATP5ME/subunit e, ATP5MF/subunit f, ATP5MG/subunit g, ATP5MK/subunit k, ATP5MJ/subunit j, ATP5F1C/subunit gamma, ATP5F1D/subunit delta, ATP5F1E/subunit epsilon, ATP5PF/subunit F6, ATP5PB/subunit b, ATP5PD/subunit d, ATP5PO/subunit OSCP. ATP synthase complex consists of a soluble F(1) head domain (subunits alpha(3) and beta(3)) - the catalytic core - and a membrane F(0) domain - the membrane proton channel (subunits c, a, 8, e, f, g, k and j). These two domains are linked by a central stalk (subunits gamma, delta, and epsilon) rotating inside the F1 region and a stationary peripheral stalk (subunits F6, b, d, and OSCP). Interacts with DNAJC30; interaction is direct.

It localises to the mitochondrion inner membrane. It catalyses the reaction H(+)(in) = H(+)(out). Functionally, subunit a, of the mitochondrial membrane ATP synthase complex (F(1)F(0) ATP synthase or Complex V) that produces ATP from ADP in the presence of a proton gradient across the membrane which is generated by electron transport complexes of the respiratory chain. ATP synthase complex consist of a soluble F(1) head domain - the catalytic core - and a membrane F(1) domain - the membrane proton channel. These two domains are linked by a central stalk rotating inside the F(1) region and a stationary peripheral stalk. During catalysis, ATP synthesis in the catalytic domain of F(1) is coupled via a rotary mechanism of the central stalk subunits to proton translocation. With the subunit c (ATP5MC1), forms the proton-conducting channel in the F(0) domain, that contains two crucial half-channels (inlet and outlet) that facilitate proton movement from the mitochondrial intermembrane space (IMS) into the matrix. Protons are taken up via the inlet half-channel and released through the outlet half-channel, following a Grotthuss mechanism. This chain is ATP synthase F(0) complex subunit a, found in Pongo abelii (Sumatran orangutan).